A 393-amino-acid chain; its full sequence is Elongation factor Tu (393 aa).

Residues 10–202 (KPHVNIGTIG…AVDEYIPTPE (193 aa)) form the tr-type G domain. Positions 19 to 26 (GHVDHGKT) are G1. 19 to 26 (GHVDHGKT) provides a ligand contact to GTP. Residue Thr-26 participates in Mg(2+) binding. Positions 60 to 64 (GITIN) are G2. The interval 81–84 (DCPG) is G3. GTP-binding positions include 81–85 (DCPGH) and 136–139 (NKAD). Residues 136–139 (NKAD) are G4. Positions 174–176 (SAL) are G5.

The protein belongs to the TRAFAC class translation factor GTPase superfamily. Classic translation factor GTPase family. EF-Tu/EF-1A subfamily. As to quaternary structure, monomer.

The protein localises to the cytoplasm. It carries out the reaction GTP + H2O = GDP + phosphate + H(+). Functionally, GTP hydrolase that promotes the GTP-dependent binding of aminoacyl-tRNA to the A-site of ribosomes during protein biosynthesis. In Clostridium novyi (strain NT), this protein is Elongation factor Tu.